We begin with the raw amino-acid sequence, 490 residues long: N-succinylglutamate 5-semialdehyde dehydrogenase (490 aa).

An NAD(+)-binding site is contributed by 220–225 (GSANTG). Catalysis depends on residues E243 and C277.

The protein belongs to the aldehyde dehydrogenase family. AstD subfamily.

It catalyses the reaction N-succinyl-L-glutamate 5-semialdehyde + NAD(+) + H2O = N-succinyl-L-glutamate + NADH + 2 H(+). Its pathway is amino-acid degradation; L-arginine degradation via AST pathway; L-glutamate and succinate from L-arginine: step 4/5. Functionally, catalyzes the NAD-dependent reduction of succinylglutamate semialdehyde into succinylglutamate. The polypeptide is N-succinylglutamate 5-semialdehyde dehydrogenase (Shigella dysenteriae serotype 1 (strain Sd197)).